We begin with the raw amino-acid sequence, 213 residues long: Ras-related protein Rab-25 (213 aa).

GTP-binding residues include serine 21, glycine 24, lysine 25, threonine 26, asparagine 27, serine 38, histidine 39, threonine 43, and threonine 44. Threonine 26 contributes to the Mg(2+) binding site. 2 short sequence motifs (switch) span residues 35–49 (NEFSHDSRTTIGVEF) and 67–84 (DTAGLERYRAITSAYYRG). The Mg(2+) site is built by threonine 44 and aspartate 67. GTP-binding residues include glycine 70, asparagine 125, lysine 126, aspartate 128, alanine 156, and leucine 157. S-geranylgeranyl cysteine attachment occurs at residues cysteine 209 and cysteine 210. A Cysteine methyl ester modification is found at cysteine 210. A propeptide spans 211–213 (ISL) (removed in mature form).

This sequence belongs to the small GTPase superfamily. Rab family. Interacts (GTP-bound form) with RAB11FIP1, RAB11FIP2, RAB11FIP3 and RAB11FIP4. Interacts (via the hypervariable C-terminal region) with ITGB1 (via the cytoplasmic region); the interaction is GTP-dependent. Interacts with ITGAV. Associates with the integrin alpha-V/beta-1 heterodimer. Interacts with VPS33B. Requires Mg(2+) as cofactor.

It localises to the cell membrane. It is found in the cell projection. The protein resides in the pseudopodium membrane. Its subcellular location is the cytoplasmic vesicle. The catalysed reaction is GTP + H2O = GDP + phosphate + H(+). Regulated by guanine nucleotide exchange factors (GEFs) which promote the exchange of bound GDP for free GTP. Regulated by GTPase activating proteins (GAPs) which increase the GTP hydrolysis activity. Inhibited by GDP dissociation inhibitors (GDIs) which prevent Rab-GDP dissociation. Functionally, the small GTPases Rab are key regulators of intracellular membrane trafficking, from the formation of transport vesicles to their fusion with membranes. Rabs cycle between an inactive GDP-bound form and an active GTP-bound form that is able to recruit to membranes different set of downstream effectors directly responsible for vesicle formation, movement, tethering and fusion. RAB25 regulates epithelial cell differentiation, proliferation and survival, thereby playing key roles in tumorigenesis. Promotes invasive migration of cells in which it functions to localize and maintain integrin alpha-V/beta-1 at the tips of extending pseudopodia. Involved in the regulation of epithelial morphogenesis through the control of CLDN4 expression and localization at tight junctions. May selectively regulate the apical recycling pathway. Together with MYO5B regulates transcytosis. The chain is Ras-related protein Rab-25 (RAB25) from Bos taurus (Bovine).